The following is a 107-amino-acid chain: MRLQWPKFITFLSTGSCCLLFLLLPCSFFPLPTAMHSGKCTACVSVAGIPQLRVTISNSTSRTTFMFAVTTKGKTSIKASNVIRARELYLAYVLYITQARANTWLVV.

The N-terminal stretch at 1 to 34 (MRLQWPKFITFLSTGSCCLLFLLLPCSFFPLPTA) is a signal peptide.

This is an uncharacterized protein from Saccharomyces cerevisiae (strain ATCC 204508 / S288c) (Baker's yeast).